Here is a 66-residue protein sequence, read N- to C-terminus: Large ribosomal subunit protein bL33c (66 aa).

This sequence belongs to the bacterial ribosomal protein bL33 family.

The protein resides in the plastid. Its subcellular location is the chloroplast. The protein is Large ribosomal subunit protein bL33c of Gossypium barbadense (Sea Island cotton).